Reading from the N-terminus, the 569-residue chain is Pyruvate decarboxylase (569 aa).

Pyruvate contacts are provided by D38 and H124. Residues T398 and G421 to I423 contribute to the thiamine diphosphate site. A Mg(2+)-binding site is contributed by D451. Thiamine diphosphate contacts are provided by residues G452–S453 and N478–I483. Mg(2+)-binding residues include N478 and G480. Pyruvate is bound at residue E484.

Belongs to the TPP enzyme family. In terms of assembly, homotetramer. The cofactor is Mg(2+). Thiamine diphosphate is required as a cofactor.

It carries out the reaction a 2-oxocarboxylate + H(+) = an aldehyde + CO2. The catalysed reaction is pyruvate + H(+) = acetaldehyde + CO2. The sequence is that of Pyruvate decarboxylase (pdcA) from Aspergillus terreus (strain NIH 2624 / FGSC A1156).